Consider the following 2596-residue polypeptide: Protein unc-79 homolog (2596 aa).

Ser-754 and Ser-758 each carry phosphoserine. Disordered regions lie at residues 907-931 (GPEG…TVPS), 1539-1573 (SQRQ…GFQE), 1594-1632 (VDSP…DSDS), 1648-1679 (EEEE…SVLS), 1695-1832 (KDFS…FKIQ), and 1863-1909 (LGEQ…KQIQ). The span at 1594–1606 (VDSPGKPAPREDL) shows a compositional bias: basic and acidic residues. Positions 1662-1679 (GNNAASSPSIPSQPSVLS) are enriched in low complexity. Over residues 1704-1713 (NHQSASNEDS) the composition is skewed to polar residues. Basic and acidic residues predominate over residues 1726 to 1735 (ELSKSEELRE). Residues 1897-1908 (ETSSHSSISKQI) are compositionally biased toward polar residues. The next 2 helical transmembrane spans lie at 2184–2204 (LLSF…ELCG) and 2426–2446 (CVLH…WTVY).

The protein belongs to the unc-79 family. NALCN complex consists of NALCN and auxiliary subunits, UNC79, UNC80 and NACL1. These auxiliary subunits are essential for the NALCN channel function. UNC80 bridges NALCN to UNC79. Interacts with NALCN. Interacts with UNC80.

It localises to the cell membrane. Functionally, auxiliary subunit of the NALCN sodium channel complex. The NALCN sodium channel complex is a voltage-gated ion channel responsible for the resting Na(+) permeability that controls neuronal excitability. Activated by neuropeptides substance P, neurotensin, and extracellular calcium that regulates neuronal excitability by controlling the sizes of NALCN-dependent sodium-leak current. In Mus musculus (Mouse), this protein is Protein unc-79 homolog (Unc79).